The sequence spans 135 residues: Small ribosomal subunit protein uS12 (135 aa).

Asp89 is modified (3-methylthioaspartic acid). The interval 108–135 is disordered; the sequence is NKRTVSRSKYGTKKAKATDKKATDSKKK. Basic residues predominate over residues 111-122; that stretch reads TVSRSKYGTKKA. The segment covering 123–135 has biased composition (basic and acidic residues); the sequence is KATDKKATDSKKK.

This sequence belongs to the universal ribosomal protein uS12 family. In terms of assembly, part of the 30S ribosomal subunit. Contacts proteins S8 and S17. May interact with IF1 in the 30S initiation complex.

Functionally, with S4 and S5 plays an important role in translational accuracy. Interacts with and stabilizes bases of the 16S rRNA that are involved in tRNA selection in the A site and with the mRNA backbone. Located at the interface of the 30S and 50S subunits, it traverses the body of the 30S subunit contacting proteins on the other side and probably holding the rRNA structure together. The combined cluster of proteins S8, S12 and S17 appears to hold together the shoulder and platform of the 30S subunit. The chain is Small ribosomal subunit protein uS12 from Helicobacter pylori (strain HPAG1).